Here is a 509-residue protein sequence, read N- to C-terminus: Autophagy-related protein 16 (509 aa).

WD repeat units lie at residues 223–262 (AHEG…LIKS), 265–304 (GSLG…VRHT), 307–347 (GHTD…CTNT), 349–388 (LFTS…LLSE), 391–430 (GHSS…ICGT), 437–478 (RLAS…SILK), and 480–509 (QTSP…CTWT).

Belongs to the WD repeat ATG16 family.

Functionally, may play a role in autophagy. This Arabidopsis thaliana (Mouse-ear cress) protein is Autophagy-related protein 16.